Reading from the N-terminus, the 518-residue chain is Maturase K (518 aa).

This sequence belongs to the intron maturase 2 family. MatK subfamily.

Its subcellular location is the plastid. It is found in the chloroplast. Usually encoded in the trnK tRNA gene intron. Probably assists in splicing its own and other chloroplast group II introns. The chain is Maturase K from Syzygium cumini (Java plum).